A 356-amino-acid chain; its full sequence is MNKGLCNWRLFSLFGMMALLLAGCGKPFLSTLQPAGEVADMQYSLMLLSTSIMVLVIVVVAIIFVYVVIRFRRRKGEENKIPKQVEGSHKLEIIWTVIPIILLLILAVPTVLTTFKLADVKAMNDKKRDKNTVVVNVRANQYWWEFEYPDYGIITSQDLVVPTNEKVYFNLIASDVKHSFWIPAVGGKMDTNTDNKNQFWLVFDQKATDKAGGVFYGKCAELCGPSHALMDFKVRPLPRDQFDAWVKKMQNAKKPVVTDPVAKEGEAIFNKSCIGCHAVTPLDKRPAQRRTAPNLADFGDRERIAGILEHNEENLKKWLRDPNSVKPGNKMAGTYGHLTEEQIDALTKYLMSLKVE.

The N-terminal stretch at 1–23 (MNKGLCNWRLFSLFGMMALLLAG) is a signal peptide. The segment at 24–259 (CGKPFLSTLQ…QNAKKPVVTD (236 aa)) is cytochrome c oxidase subunit II. The next 2 helical transmembrane spans lie at 45-65 (LMLL…IIFV) and 93-113 (IIWT…TVLT). Residues His-178, Cys-219, Cys-223, and His-227 each contribute to the Cu cation site. Positions 260–356 (PVAKEGEAIF…TKYLMSLKVE (97 aa)) constitute a Cytochrome c domain. 4 residues coordinate heme c: Cys-273, Cys-276, His-277, and Met-331.

It belongs to the cytochrome c oxidase subunit 2 family. The cofactor is Cu cation. It depends on heme c as a cofactor.

The protein resides in the cell membrane. The catalysed reaction is 4 Fe(II)-[cytochrome c] + O2 + 8 H(+)(in) = 4 Fe(III)-[cytochrome c] + 2 H2O + 4 H(+)(out). Subunits I and II form the functional core of the enzyme complex. Electrons originating in cytochrome c are transferred via heme a and Cu(A) to the binuclear center formed by heme a3 and Cu(B). The chain is Cytochrome c oxidase subunit 2 (ctaC) from Bacillus sp. (strain PS3).